Reading from the N-terminus, the 276-residue chain is MLTDNRLGEATLSPSIHPTAIIHPQAQLHATVQVGAFSVIGEKVTIGANTVIGPHVVVEGPTEIGTGNRIFPGAVIGCEPQDLKYKGGESWVKIGNDNQIREYVTINRATEEGAVTRIGDRNLLMAYAHVAHNCVIENEVIIANSVALAGHIYIESQARISGVLGVHQFVHIGRLAMVGGMSRIERDVPPFTIVEGNPSRVRSLNLIGLQRSGMSAEDLSALKQAFRLIYRSDTPYQQALEELGRSAAHPYVQHFQCFLQKSSYDQGRRGPIPGKK.

The protein belongs to the transferase hexapeptide repeat family. LpxA subfamily. Homotrimer.

The protein localises to the cytoplasm. It carries out the reaction a (3R)-hydroxyacyl-[ACP] + UDP-N-acetyl-alpha-D-glucosamine = a UDP-3-O-[(3R)-3-hydroxyacyl]-N-acetyl-alpha-D-glucosamine + holo-[ACP]. It functions in the pathway glycolipid biosynthesis; lipid IV(A) biosynthesis; lipid IV(A) from (3R)-3-hydroxytetradecanoyl-[acyl-carrier-protein] and UDP-N-acetyl-alpha-D-glucosamine: step 1/6. In terms of biological role, involved in the biosynthesis of lipid A, a phosphorylated glycolipid that anchors the lipopolysaccharide to the outer membrane of the cell. The chain is Acyl-[acyl-carrier-protein]--UDP-N-acetylglucosamine O-acyltransferase from Synechocystis sp. (strain ATCC 27184 / PCC 6803 / Kazusa).